The primary structure comprises 264 residues: Thymidylate synthase (264 aa).

A dUMP-binding site is contributed by arginine 21. Histidine 51 contributes to the (6R)-5,10-methylene-5,6,7,8-tetrahydrofolate binding site. Position 126–127 (126–127 (RR)) interacts with dUMP. Residue cysteine 146 is the Nucleophile of the active site. Residues 166–169 (RSAD), asparagine 177, and 207–209 (HLY) each bind dUMP. Residue aspartate 169 coordinates (6R)-5,10-methylene-5,6,7,8-tetrahydrofolate. Alanine 263 is a (6R)-5,10-methylene-5,6,7,8-tetrahydrofolate binding site.

The protein belongs to the thymidylate synthase family. Bacterial-type ThyA subfamily. In terms of assembly, homodimer.

It localises to the cytoplasm. It catalyses the reaction dUMP + (6R)-5,10-methylene-5,6,7,8-tetrahydrofolate = 7,8-dihydrofolate + dTMP. It participates in pyrimidine metabolism; dTTP biosynthesis. Functionally, catalyzes the reductive methylation of 2'-deoxyuridine-5'-monophosphate (dUMP) to 2'-deoxythymidine-5'-monophosphate (dTMP) while utilizing 5,10-methylenetetrahydrofolate (mTHF) as the methyl donor and reductant in the reaction, yielding dihydrofolate (DHF) as a by-product. This enzymatic reaction provides an intracellular de novo source of dTMP, an essential precursor for DNA biosynthesis. The chain is Thymidylate synthase from Legionella pneumophila subsp. pneumophila (strain Philadelphia 1 / ATCC 33152 / DSM 7513).